Consider the following 259-residue polypeptide: Glutamate 5-kinase (259 aa).

Lysine 18 lines the ATP pocket. The substrate site is built by serine 54, aspartate 141, and asparagine 153. Serine 173–aspartate 174 provides a ligand contact to ATP.

The protein belongs to the glutamate 5-kinase family.

The protein localises to the cytoplasm. It carries out the reaction L-glutamate + ATP = L-glutamyl 5-phosphate + ADP. The protein operates within amino-acid biosynthesis; L-proline biosynthesis; L-glutamate 5-semialdehyde from L-glutamate: step 1/2. Its function is as follows. Catalyzes the transfer of a phosphate group to glutamate to form L-glutamate 5-phosphate. The polypeptide is Glutamate 5-kinase (Clavibacter sepedonicus (Clavibacter michiganensis subsp. sepedonicus)).